We begin with the raw amino-acid sequence, 953 residues long: E3 ubiquitin-protein ligase ZNF598 (953 aa).

Residues 25 to 39 (KPSKSTRIKPTKPHH) are compositionally biased toward basic residues. The segment at 25 to 47 (KPSKSTRIKPTKPHHTPSNSMES) is disordered. The RING-type zinc finger occupies 57 to 97 (CVLCCQDIDLFAVGKCDHPVCYRCSTKMRVLCEQKYCAVCR). The C2H2-type zinc finger occupies 215-238 (PLCKFCDDRYLDNDELLKHLRRDH). Disordered regions lie at residues 299 to 779 (SKNR…EDSS) and 884 to 911 (EKQQ…SSLD). Positions 371–380 (AAAMRASMAS) are enriched in low complexity. Positions 381-409 (HQEERSHAQERSMLKPRREEKLEPDETRN) are enriched in basic and acidic residues. Composition is skewed to polar residues over residues 410–431 (NRST…NGSL) and 467–483 (LSGS…YTNQ). S489 carries the post-translational modification Phosphoserine. Low complexity-rich tracts occupy residues 508–518 (QSSAASAWSQA) and 536–553 (MTPM…PLPS). Polar residues-rich tracts occupy residues 555-564 (SVPQPLTASS) and 641-650 (LGSPSHTPET). Over residues 655 to 666 (AHKENVPEKKPP) the composition is skewed to basic and acidic residues. Residues 695–711 (SCTSFPENITSSKQPVT) are compositionally biased toward polar residues. A compositionally biased stretch (pro residues) spans 747–765 (LPPPPPPGLGPAVSKPPPG). The span at 770–779 (PLNSNVEDSS) shows a compositional bias: polar residues.

It belongs to the ZNF598/HEL2 family.

The protein resides in the cytoplasm. Its subcellular location is the cytosol. The enzyme catalyses S-ubiquitinyl-[E2 ubiquitin-conjugating enzyme]-L-cysteine + [acceptor protein]-L-lysine = [E2 ubiquitin-conjugating enzyme]-L-cysteine + N(6)-ubiquitinyl-[acceptor protein]-L-lysine.. It participates in protein modification; protein ubiquitination. Its function is as follows. E3 ubiquitin-protein ligase that plays a key role in the ribosome quality control (RQC), a pathway that takes place when a ribosome has stalled during translation, leading to degradation of nascent peptide chains. ZNF598 is activated when ribosomes are stalled within an mRNA following translation of prematurely polyadenylated mRNAs. Acts as a ribosome collision sensor: specifically recognizes and binds collided di-ribosome, which arises when a trailing ribosome encounters a slower leading ribosome, leading to terminally arrest translation. Following binding to colliding ribosomes, mediates monoubiquitination of 40S ribosomal proteins RPS10/eS10 and RPS3/uS3, and 'Lys-63'-linked polyubiquitination of RPS20/uS10. Polyubiquitination of RPS20/uS10 promotes recruitment of the RQT (ribosome quality control trigger) complex, which drives the disassembly of stalled ribosomes, followed by degradation of nascent peptides. This Danio rerio (Zebrafish) protein is E3 ubiquitin-protein ligase ZNF598.